A 160-amino-acid chain; its full sequence is Major strawberry allergen Fra a 1.05 (160 aa).

Belongs to the BetVI family. Post-translationally, phosphorylated in vivo. Phosphorylation prevents its activity as ribonuclease.

Possesses ribonuclease activity in vitro. This chain is Major strawberry allergen Fra a 1.05, found in Fragaria ananassa (Strawberry).